Consider the following 377-residue polypeptide: Peroxisomal membrane protein PEX14 (377 aa).

Low complexity predominate over residues 1–20; the sequence is MASSEQAEQPSQPSSSPGSE. Residues 1–23 are disordered; that stretch reads MASSEQAEQPSQPSSSPGSENVV. A2 carries the N-acetylalanine modification. Residues 2 to 108 lie on the Peroxisomal side of the membrane; that stretch reads ASSEQAEQPS…CSPGSSRWRD (107 aa). K34 bears the N6-acetyllysine mark. Residues 109-126 traverse the membrane as a helical segment; the sequence is YGALAIIMAGIAFGFHQL. Residues 127-377 lie on the Cytoplasmic side of the membrane; sequence YKKYLLPLIL…EGASNESERH (251 aa). The segment at 230 to 377 is disordered; that stretch reads PPSPSAPKIP…EGASNESERH (148 aa). S232 carries the phosphoserine modification. Composition is skewed to low complexity over residues 244–259 and 265–275; these read PVKS…VNHH and SPVSNESTSSS. 2 positions are modified to phosphoserine: S282 and S335. Positions 323-342 are enriched in acidic residues; sequence KEEEEEEEEEDVSHVDEEDV. The segment covering 360 to 377 has biased composition (basic and acidic residues); the sequence is QVDKLRRPEGASNESERH.

Belongs to the peroxin-14 family. In terms of assembly, interacts with PEX13; forming the PEX13-PEX14 docking complex. Interacts with PEX5 (via WxxxF/Y motifs). Interacts with PEX19. Interacts with tubulin.

It is found in the peroxisome membrane. Functionally, component of the PEX13-PEX14 docking complex, a translocon channel that specifically mediates the import of peroxisomal cargo proteins bound to PEX5 receptor. The PEX13-PEX14 docking complex forms a large import pore which can be opened to a diameter of about 9 nm. Mechanistically, PEX5 receptor along with cargo proteins associates with the PEX14 subunit of the PEX13-PEX14 docking complex in the cytosol, leading to the insertion of the receptor into the organelle membrane with the concomitant translocation of the cargo into the peroxisome matrix. Plays a key role for peroxisome movement through a direct interaction with tubulin. This chain is Peroxisomal membrane protein PEX14, found in Cricetulus longicaudatus (Long-tailed dwarf hamster).